We begin with the raw amino-acid sequence, 249 residues long: NAD kinase (249 aa).

D45 functions as the Proton acceptor in the catalytic mechanism. NAD(+) is bound by residues 45–46 (DG), R50, 110–111 (NE), D138, and 149–154 (SGWGMS).

Belongs to the NAD kinase family. It depends on a divalent metal cation as a cofactor.

It localises to the cytoplasm. It catalyses the reaction NAD(+) + ATP = ADP + NADP(+) + H(+). Its function is as follows. Involved in the regulation of the intracellular balance of NAD and NADP, and is a key enzyme in the biosynthesis of NADP. Catalyzes specifically the phosphorylation on 2'-hydroxyl of the adenosine moiety of NAD to yield NADP. In Saccharolobus islandicus (strain Y.N.15.51 / Yellowstone #2) (Sulfolobus islandicus), this protein is NAD kinase.